Here is a 216-residue protein sequence, read N- to C-terminus: Flavin prenyltransferase UbiX (216 aa).

FMN contacts are provided by residues 9–11, Ser35, and Arg144; that span reads GAS. Dimethylallyl phosphate is bound by residues Tyr174 and Arg190.

Belongs to the UbiX/PAD1 family.

The catalysed reaction is dimethylallyl phosphate + FMNH2 = prenylated FMNH2 + phosphate. In terms of biological role, flavin prenyltransferase that catalyzes the synthesis of the prenylated FMN cofactor (prenyl-FMN) for 4-hydroxy-3-polyprenylbenzoic acid decarboxylase UbiD. The prenyltransferase is metal-independent and links a dimethylallyl moiety from dimethylallyl monophosphate (DMAP) to the flavin N5 and C6 atoms of FMN. The polypeptide is Flavin prenyltransferase UbiX (Streptomyces coelicolor (strain ATCC BAA-471 / A3(2) / M145)).